A 244-amino-acid polypeptide reads, in one-letter code: NAD-dependent protein deacylase SIR2rp3 (244 aa).

In terms of domain architecture, Deacetylase sirtuin-type spans 1 to 239; sequence MRRPNGMIAI…PAWADEVLHG (239 aa). 13 to 32 lines the NAD(+) pocket; it reads GAGISAESGISTFRDQNGLW. Positions 57 and 60 each coordinate substrate. Position 95–98 (95–98) interacts with NAD(+); that stretch reads QNID. Catalysis depends on His-113, which acts as the Proton acceptor. Zn(2+) is bound by residues Cys-121 and Cys-141. NAD(+) is bound by residues 181-183 and Ala-225; that span reads GTS.

This sequence belongs to the sirtuin family. Class III subfamily. Zn(2+) serves as cofactor.

Its subcellular location is the mitochondrion. The enzyme catalyses N(6)-malonyl-L-lysyl-[protein] + NAD(+) + H2O = 2''-O-malonyl-ADP-D-ribose + nicotinamide + L-lysyl-[protein]. It catalyses the reaction N(6)-succinyl-L-lysyl-[protein] + NAD(+) + H2O = 2''-O-succinyl-ADP-D-ribose + nicotinamide + L-lysyl-[protein]. It carries out the reaction N(6)-glutaryl-L-lysyl-[protein] + NAD(+) + H2O = 2''-O-glutaryl-ADP-D-ribose + nicotinamide + L-lysyl-[protein]. Its function is as follows. NAD-dependent lysine demalonylase, desuccinylase and deglutarylase that specifically removes malonyl, succinyl and glutaryl groups on target proteins. Has weak NAD-dependent protein deacetylase activity; however this activity may not be physiologically relevant in vivo. The polypeptide is NAD-dependent protein deacylase SIR2rp3 (SIR2rp3) (Trypanosoma brucei brucei (strain 927/4 GUTat10.1)).